We begin with the raw amino-acid sequence, 253 residues long: Phosphoadenosine 5'-phosphosulfate reductase (253 aa).

Cys-242 acts as the Nucleophile; cysteine thiosulfonate intermediate in catalysis.

It belongs to the PAPS reductase family. CysH subfamily.

The protein resides in the cytoplasm. The enzyme catalyses [thioredoxin]-disulfide + sulfite + adenosine 3',5'-bisphosphate + 2 H(+) = [thioredoxin]-dithiol + 3'-phosphoadenylyl sulfate. The protein operates within sulfur metabolism; hydrogen sulfide biosynthesis; sulfite from sulfate: step 3/3. Its function is as follows. Catalyzes the formation of sulfite from phosphoadenosine 5'-phosphosulfate (PAPS) using thioredoxin as an electron donor. The chain is Phosphoadenosine 5'-phosphosulfate reductase from Vibrio cholerae serotype O1 (strain ATCC 39541 / Classical Ogawa 395 / O395).